The sequence spans 705 residues: Lethal(3)malignant brain tumor-like protein 2 (705 aa).

A disordered region spans residues 1-84 (MEKPRSIEET…GTPRSLDGSG (84 aa)). At Ser13 the chain carries Phosphoserine. Acidic residues predominate over residues 15–25 (PMEEEEDDDLE). The segment covering 38–49 (SSVGSESSSYLE) has biased composition (low complexity). Over residues 50–60 (ESSEAENEDRE) the composition is skewed to acidic residues. Phosphoserine is present on Ser67. At Thr76 the chain carries Phosphothreonine. An FCS-type zinc finger spans residues 81-116 (DGSGSEPAVCEMCGIVGTREAFFSKTKRFCSVSCSR). 4 residues coordinate Zn(2+): Cys90, Cys93, Cys110, and Cys114. MBT repeat units follow at residues 179 to 283 (FDWG…LVPP), 291 to 391 (TDWK…IKMS), 397 to 500 (MAHH…LTPP), and 508 to 604 (FNWE…LQPP). Ser338 carries the post-translational modification Phosphoserine. Residue Lys405 forms a Glycyl lysine isopeptide (Lys-Gly) (interchain with G-Cter in SUMO2) linkage. The disordered stretch occupies residues 608-665 (EPATPLKAKEATKKKKKQFGKKRKRIPPTKTRPLRQGSKKPLLEDDPQGARKISSEPV). Over residues 619–634 (TKKKKKQFGKKRKRIP) the composition is skewed to basic residues. Residues Lys647, Lys659, and Lys675 each participate in a glycyl lysine isopeptide (Lys-Gly) (interchain with G-Cter in SUMO2) cross-link. A disordered region spans residues 680–705 (DVASPDKASSPELPVSVENIKQETDD). Phosphoserine is present on residues Ser683, Ser688, and Ser689. Lys700 is covalently cross-linked (Glycyl lysine isopeptide (Lys-Gly) (interchain with G-Cter in SUMO1); alternate). Lys700 participates in a covalent cross-link: Glycyl lysine isopeptide (Lys-Gly) (interchain with G-Cter in SUMO2); alternate.

Part of the E2F6.com-1 complex in G0 phase composed of E2F6, MGA, MAX, TFDP1, CBX3, BAT8, EUHMTASE1, RING1, RNF2, MBLR, BAT8 and YAF2.

It is found in the nucleus. Functionally, putative Polycomb group (PcG) protein. PcG proteins maintain the transcriptionally repressive state of genes, probably via a modification of chromatin, rendering it heritably changed in its expressibility. Its association with a chromatin-remodeling complex suggests that it may contribute to prevent expression of genes that trigger the cell into mitosis. Binds to monomethylated and dimethylated 'Lys-20' on histone H4. Binds histone H3 peptides that are monomethylated or dimethylated on 'Lys-4', 'Lys-9' or 'Lys-27'. The polypeptide is Lethal(3)malignant brain tumor-like protein 2 (L3MBTL2) (Homo sapiens (Human)).